The sequence spans 197 residues: 3-isopropylmalate dehydratase small subunit (197 aa).

The protein belongs to the LeuD family. LeuD type 1 subfamily. Heterodimer of LeuC and LeuD.

The enzyme catalyses (2R,3S)-3-isopropylmalate = (2S)-2-isopropylmalate. It participates in amino-acid biosynthesis; L-leucine biosynthesis; L-leucine from 3-methyl-2-oxobutanoate: step 2/4. Functionally, catalyzes the isomerization between 2-isopropylmalate and 3-isopropylmalate, via the formation of 2-isopropylmaleate. The chain is 3-isopropylmalate dehydratase small subunit from Mycobacterium sp. (strain JLS).